Consider the following 152-residue polypeptide: Protein-export protein SecB (152 aa).

Belongs to the SecB family. Homotetramer, a dimer of dimers. One homotetramer interacts with 1 SecA dimer.

The protein resides in the cytoplasm. Functionally, one of the proteins required for the normal export of preproteins out of the cell cytoplasm. It is a molecular chaperone that binds to a subset of precursor proteins, maintaining them in a translocation-competent state. It also specifically binds to its receptor SecA. The protein is Protein-export protein SecB of Rickettsia massiliae (strain Mtu5).